The sequence spans 144 residues: Ribosome-binding factor A (144 aa).

Positions 120–144 (DKRRMAEAGREEDEAAPDDTTEDKA) are disordered. Acidic residues predominate over residues 129–144 (REEDEAAPDDTTEDKA).

This sequence belongs to the RbfA family. Monomer. Binds 30S ribosomal subunits, but not 50S ribosomal subunits or 70S ribosomes.

Its subcellular location is the cytoplasm. Functionally, one of several proteins that assist in the late maturation steps of the functional core of the 30S ribosomal subunit. Associates with free 30S ribosomal subunits (but not with 30S subunits that are part of 70S ribosomes or polysomes). Required for efficient processing of 16S rRNA. May interact with the 5'-terminal helix region of 16S rRNA. This Aeromonas salmonicida (strain A449) protein is Ribosome-binding factor A.